A 164-amino-acid polypeptide reads, in one-letter code: MSLNIEDKKAVVAEVSAQLAEAQTLVIAEYRGIEVSSMTKLRAQARENGVYLRVLKNTLVRRAVEGTPFAGLADQMVGPLVYAVSADPVAAAKVLHQFAKADDKIIVKAGSYDGQVLNAAQVAELASIPSREELLSKLLYVMQAPVAGFARALAALAEKQAEAA.

The protein belongs to the universal ribosomal protein uL10 family. In terms of assembly, part of the ribosomal stalk of the 50S ribosomal subunit. The N-terminus interacts with L11 and the large rRNA to form the base of the stalk. The C-terminus forms an elongated spine to which L12 dimers bind in a sequential fashion forming a multimeric L10(L12)X complex.

Functionally, forms part of the ribosomal stalk, playing a central role in the interaction of the ribosome with GTP-bound translation factors. The sequence is that of Large ribosomal subunit protein uL10 from Chromobacterium violaceum (strain ATCC 12472 / DSM 30191 / JCM 1249 / CCUG 213 / NBRC 12614 / NCIMB 9131 / NCTC 9757 / MK).